A 70-amino-acid polypeptide reads, in one-letter code: Peptide Hp1035 (70 aa).

An N-terminal signal peptide occupies residues 1–23; it reads MKTQFVILLVALVLFQMFAQSEA. Phe36 is subject to Phenylalanine amide. Residues 40–70 constitute a propeptide that is removed on maturation; the sequence is GLQDLDMDDLDQLFDGEISQADINFLNQLMR.

The protein belongs to the non-disulfide-bridged peptide (NDBP) superfamily. Short antimicrobial peptide (group 4) family. As to expression, expressed by the venom gland.

It localises to the secreted. The protein resides in the target cell membrane. Amphipathic peptide with antimicrobial activity. The sequence is that of Peptide Hp1035 from Heterometrus petersii (Asian forest scorpion).